A 157-amino-acid polypeptide reads, in one-letter code: Small ribosomal subunit protein uS7 (157 aa).

The protein belongs to the universal ribosomal protein uS7 family. Part of the 30S ribosomal subunit. Contacts proteins S9 and S11.

One of the primary rRNA binding proteins, it binds directly to 16S rRNA where it nucleates assembly of the head domain of the 30S subunit. Is located at the subunit interface close to the decoding center, probably blocks exit of the E-site tRNA. This is Small ribosomal subunit protein uS7 from Albidiferax ferrireducens (strain ATCC BAA-621 / DSM 15236 / T118) (Rhodoferax ferrireducens).